The sequence spans 334 residues: Fructose-1,6-bisphosphatase class 1 (334 aa).

Residues Glu92, Asp114, Leu116, and Asp117 each coordinate Mg(2+). Residues 117–120 and Asn209 contribute to the substrate site; that span reads DGSS. Glu281 lines the Mg(2+) pocket.

It belongs to the FBPase class 1 family. Homotetramer. Requires Mg(2+) as cofactor.

Its subcellular location is the cytoplasm. The catalysed reaction is beta-D-fructose 1,6-bisphosphate + H2O = beta-D-fructose 6-phosphate + phosphate. It participates in carbohydrate biosynthesis; gluconeogenesis. This is Fructose-1,6-bisphosphatase class 1 from Nitrosomonas eutropha (strain DSM 101675 / C91 / Nm57).